A 578-amino-acid polypeptide reads, in one-letter code: Longifolene synthase (578 aa).

Aspartate 331, aspartate 335, and aspartate 475 together coordinate Mg(2+). The short motif at 331–335 (DDLYD) is the DDXXD motif element.

The protein belongs to the terpene synthase family. Tpsd subfamily. The cofactor is Mg(2+). Mn(2+) is required as a cofactor.

It localises to the cytoplasm. The enzyme catalyses (2E,6E)-farnesyl diphosphate = longifolene + diphosphate. The protein operates within sesquiterpene biosynthesis. It participates in terpene metabolism; oleoresin biosynthesis. Functionally, involved in defensive oleoresin formation in conifers in response to insect attack or other injury. Involved in sesquiterpene (C15) olefins biosynthesis. Produces mainly longifolene, but also multiple minor products including alpha-longipinene, alpha-longicyclene, E-beta-farnesene, longiborneol, cyclosativene, beta-longipinene, and 12 other sesquiterpenes when used with farnesyl diphosphate (FPP) as substrate. In Picea abies (Norway spruce), this protein is Longifolene synthase (TPS-Lon).